The primary structure comprises 278 residues: Alcohol dehydrogenase-related 31 kDa protein (278 aa).

11 to 34 (YVADCGGIALETSKVLMTKNIAKL) contributes to the NAD(+) binding site. S139 contributes to the substrate binding site. Residue Y152 is the Proton acceptor of the active site.

The protein belongs to the short-chain dehydrogenases/reductases (SDR) family.

The polypeptide is Alcohol dehydrogenase-related 31 kDa protein (Adhr) (Drosophila persimilis (Fruit fly)).